Reading from the N-terminus, the 268-residue chain is Thiazole synthase (268 aa).

The Schiff-base intermediate with DXP role is filled by lysine 96. 1-deoxy-D-xylulose 5-phosphate contacts are provided by residues glycine 157, alanine 185–glycine 186, and asparagine 207–threonine 208. The tract at residues proline 238–glutamine 268 is disordered. Pro residues predominate over residues proline 258 to glutamine 268.

It belongs to the ThiG family. In terms of assembly, homotetramer. Forms heterodimers with either ThiH or ThiS.

The protein localises to the cytoplasm. It carries out the reaction [ThiS sulfur-carrier protein]-C-terminal-Gly-aminoethanethioate + 2-iminoacetate + 1-deoxy-D-xylulose 5-phosphate = [ThiS sulfur-carrier protein]-C-terminal Gly-Gly + 2-[(2R,5Z)-2-carboxy-4-methylthiazol-5(2H)-ylidene]ethyl phosphate + 2 H2O + H(+). Its pathway is cofactor biosynthesis; thiamine diphosphate biosynthesis. Catalyzes the rearrangement of 1-deoxy-D-xylulose 5-phosphate (DXP) to produce the thiazole phosphate moiety of thiamine. Sulfur is provided by the thiocarboxylate moiety of the carrier protein ThiS. In vitro, sulfur can be provided by H(2)S. The protein is Thiazole synthase of Thermus thermophilus (strain ATCC BAA-163 / DSM 7039 / HB27).